An 81-amino-acid polypeptide reads, in one-letter code: ATP synthase subunit c (81 aa).

A run of 2 helical transmembrane segments spans residues 6-26 and 57-77; these read ASAS…GPGI and LAFM…LLFA.

The protein belongs to the ATPase C chain family. F-type ATPases have 2 components, F(1) - the catalytic core - and F(0) - the membrane proton channel. F(1) has five subunits: alpha(3), beta(3), gamma(1), delta(1), epsilon(1). F(0) has four main subunits: a(1), b(1), b'(1) and c(10-14). The alpha and beta chains form an alternating ring which encloses part of the gamma chain. F(1) is attached to F(0) by a central stalk formed by the gamma and epsilon chains, while a peripheral stalk is formed by the delta, b and b' chains.

The protein localises to the cellular thylakoid membrane. F(1)F(0) ATP synthase produces ATP from ADP in the presence of a proton or sodium gradient. F-type ATPases consist of two structural domains, F(1) containing the extramembraneous catalytic core and F(0) containing the membrane proton channel, linked together by a central stalk and a peripheral stalk. During catalysis, ATP synthesis in the catalytic domain of F(1) is coupled via a rotary mechanism of the central stalk subunits to proton translocation. Its function is as follows. Key component of the F(0) channel; it plays a direct role in translocation across the membrane. A homomeric c-ring of between 10-14 subunits forms the central stalk rotor element with the F(1) delta and epsilon subunits. The polypeptide is ATP synthase subunit c (Gloeothece citriformis (strain PCC 7424) (Cyanothece sp. (strain PCC 7424))).